The chain runs to 409 residues: MGGANGKSGLRVWRNARLATMADGVAGLGIVEKGAIATRDGLIIYAGAEASMPALAGPGAETVDCEGRWITPGLIDCHTHLVYAGNRANEFEMRLAGATYEEVARAGGGIVSSVKSLRAANEDELVAQTLPRLDALMAEGVTTVEVKSGYGLDLDNEKKSLRAARRLANERPVTIRTTCLAAHALPPEAKGDKEAFVDLVAGTILPGVAAEKLADAVDGFCEGIAFSPEQIARVFDKARALGLPVKLHADQLSNLHGAALAASYGALSADHLEYTDEAGAAAMAKAGTVATILPGAYYFIRETKKPPVDLFRRHGVKMAVATDSNPGTSPLTSLLLTMNMAATLFGLTVDECLAGVTREAARALGLLDKTGTLEAGKSADLAIWDIERPAELVYRMGFNPLHARIWRGQ.

The Fe(3+) site is built by His78 and His80. 2 residues coordinate Zn(2+): His78 and His80. Residues Arg87, Tyr150, and His183 each coordinate 4-imidazolone-5-propanoate. Position 150 (Tyr150) interacts with N-formimidoyl-L-glutamate. His248 is a Fe(3+) binding site. His248 contributes to the Zn(2+) binding site. Gln251 serves as a coordination point for 4-imidazolone-5-propanoate. Asp323 provides a ligand contact to Fe(3+). Residue Asp323 participates in Zn(2+) binding. Residues Asn325 and Gly327 each coordinate N-formimidoyl-L-glutamate. Position 328 (Thr328) interacts with 4-imidazolone-5-propanoate.

It belongs to the metallo-dependent hydrolases superfamily. HutI family. The cofactor is Zn(2+). It depends on Fe(3+) as a cofactor.

It is found in the cytoplasm. The catalysed reaction is 4-imidazolone-5-propanoate + H2O = N-formimidoyl-L-glutamate. Its pathway is amino-acid degradation; L-histidine degradation into L-glutamate; N-formimidoyl-L-glutamate from L-histidine: step 3/3. Its function is as follows. Catalyzes the hydrolytic cleavage of the carbon-nitrogen bond in imidazolone-5-propanoate to yield N-formimidoyl-L-glutamate. It is the third step in the universal histidine degradation pathway. This chain is Imidazolonepropionase, found in Mesorhizobium japonicum (strain LMG 29417 / CECT 9101 / MAFF 303099) (Mesorhizobium loti (strain MAFF 303099)).